The chain runs to 166 residues: Disulfide bond formation protein B (166 aa).

Over 1 to 12 (MKITKLPSYRQT) the chain is Cytoplasmic. Residues 13 to 29 (ALIIFAGCVGLILAALY) traverse the membrane as a helical segment. Residues 30 to 47 (MQEVLGLHPCPLCITQRI) are Periplasmic-facing. Residues Cys39 and Cys42 are joined by a disulfide bond. A helical transmembrane segment spans residues 48–64 (FIIGVGLISLIAAIHNP). The Cytoplasmic segment spans residues 65–70 (AALGRK). The chain crosses the membrane as a helical span at residues 71-88 (VYGCLATLSGVIGAGVSA). The Periplasmic portion of the chain corresponds to 89–145 (RHVWLQNLPEDQVPACGPDLAYMFDAFPLLDALKLLFAGDGNCADVVASFLGLSIPG). Cys104 and Cys131 form a disulfide bridge. Residues 146–164 (WTFVAFVGLIAISVWQGLR) traverse the membrane as a helical segment. The Cytoplasmic segment spans residues 165 to 166 (KA).

It belongs to the DsbB family.

The protein resides in the cell inner membrane. In terms of biological role, required for disulfide bond formation in some periplasmic proteins. Acts by oxidizing the DsbA protein. This chain is Disulfide bond formation protein B, found in Saccharophagus degradans (strain 2-40 / ATCC 43961 / DSM 17024).